We begin with the raw amino-acid sequence, 834 residues long: Prominin-2 (834 aa).

Residues 1-26 (MKHTLALLAPLLGLGLGLALSQLAAG) form the signal peptide. Over 27 to 106 (ATDCKFLGPA…NEVVRYEAGY (80 aa)) the chain is Extracellular. Residues 107-127 (VVCAVIAGLYLLLVPTAGLCF) form a helical membrane-spanning segment. Residues 128–153 (CCCRCHRRCGGRVKTEHKALACERAA) are Cytoplasmic-facing. The helical transmembrane segment at 154–174 (LMVFLLLTTLLLLIGVVCAFV) threads the bilayer. Topologically, residues 175–426 (TNQRTHEQMG…EVQRYETYRW (252 aa)) are extracellular. An N-linked (GlcNAc...) asparagine glycan is attached at N270. A helical membrane pass occupies residues 427–447 (IVGCVLCSVVLFVVLCNLLGL). The Cytoplasmic segment spans residues 448-472 (NLGIWGLSARDDPSHPEAKGEAGAR). The helical transmembrane segment at 473–493 (FLMAGVGLSFLFAAPLILLVF) threads the bilayer. Over 494-779 (ATFLVGGNVQ…LCDMMADPWN (286 aa)) the chain is Extracellular. S727 carries the post-translational modification Phosphoserine. Residues 780–800 (AFWFCLAWCTFFLIPSIIFAV) form a helical membrane-spanning segment. Over 801–834 (KTSKYFRPIRKRLSSTSSEETQLFHIPRVTSLKL) the chain is Cytoplasmic. The residue at position 818 (S818) is a Phosphoserine.

It belongs to the prominin family. Binds cholesterol. Glycosylated. Present in saliva within small membrane particles (at protein level). Expressed in kidney, prostate, trachea, esophagus, salivary gland, thyroid gland, mammary gland adrenal gland, placenta, stomach, spinal cord and liver. In submucosal tumor, expressed in spindle-shaped or stellate stromal cells. Expressed in prostate cancer cell lines.

It is found in the apical cell membrane. Its subcellular location is the basolateral cell membrane. The protein resides in the cell projection. The protein localises to the microvillus membrane. It localises to the cilium membrane. The chain is Prominin-2 (PROM2) from Homo sapiens (Human).